Reading from the N-terminus, the 89-residue chain is MSLDKGTKEEITKKFQLHEKDTGSADVQIAILTEHIAELKEHLKRSPKDQNSRLALLKLVGQRRKLLEYLNSTDTERYKNLITRLNLRK.

The protein belongs to the universal ribosomal protein uS15 family. Part of the 30S ribosomal subunit. Forms a bridge to the 50S subunit in the 70S ribosome, contacting the 23S rRNA.

Its function is as follows. One of the primary rRNA binding proteins, it binds directly to 16S rRNA where it helps nucleate assembly of the platform of the 30S subunit by binding and bridging several RNA helices of the 16S rRNA. Functionally, forms an intersubunit bridge (bridge B4) with the 23S rRNA of the 50S subunit in the ribosome. This Chlamydia pneumoniae (Chlamydophila pneumoniae) protein is Small ribosomal subunit protein uS15.